A 298-amino-acid polypeptide reads, in one-letter code: Inosose dehydratase 2 (298 aa).

It belongs to the IolE/MocC family. Glutathione is required as a cofactor. The cofactor is Co(2+). Mn(2+) serves as cofactor.

It catalyses the reaction scyllo-inosose = 3D-3,5/4-trihydroxycyclohexane-1,2-dione + H2O. The protein operates within polyol metabolism; myo-inositol degradation into acetyl-CoA; acetyl-CoA from myo-inositol: step 2/7. Catalyzes the dehydration of inosose (2-keto-myo-inositol, 2KMI or 2,4,6/3,5-pentahydroxycyclohexanone) to 3D-(3,5/4)-trihydroxycyclohexane-1,2-dione (D-2,3-diketo-4-deoxy-epi-inositol). The protein is Inosose dehydratase 2 of Bacillus cereus (strain ZK / E33L).